The following is a 130-amino-acid chain: Glycine cleavage system H protein (130 aa).

The Lipoyl-binding domain maps to 24–106 (IYSVGITEHA…YTDGWLFRIK (83 aa)). The residue at position 65 (Lys65) is an N6-lipoyllysine.

It belongs to the GcvH family. In terms of assembly, the glycine cleavage system is composed of four proteins: P, T, L and H. The cofactor is (R)-lipoate.

Its function is as follows. The glycine cleavage system catalyzes the degradation of glycine. The H protein shuttles the methylamine group of glycine from the P protein to the T protein. The polypeptide is Glycine cleavage system H protein (Pectobacterium atrosepticum (strain SCRI 1043 / ATCC BAA-672) (Erwinia carotovora subsp. atroseptica)).